The primary structure comprises 119 residues: Protein TusC (119 aa).

This sequence belongs to the DsrF/TusC family. Heterohexamer, formed by a dimer of trimers. The hexameric TusBCD complex contains 2 copies each of TusB, TusC and TusD. The TusBCD complex interacts with TusE.

Its subcellular location is the cytoplasm. Part of a sulfur-relay system required for 2-thiolation of 5-methylaminomethyl-2-thiouridine (mnm(5)s(2)U) at tRNA wobble positions. The protein is Protein TusC of Escherichia fergusonii (strain ATCC 35469 / DSM 13698 / CCUG 18766 / IAM 14443 / JCM 21226 / LMG 7866 / NBRC 102419 / NCTC 12128 / CDC 0568-73).